The sequence spans 333 residues: Pantothenate synthetase (333 aa).

27 to 34 (MGALHEGH) contributes to the ATP binding site. The active-site Proton donor is the His-34. (R)-pantoate is bound at residue Gln-61. Gln-61 contributes to the beta-alanine binding site. An ATP-binding site is contributed by 148-151 (GQKD). Residue Gln-154 participates in (R)-pantoate binding. Residues Val-177 and 185–188 (LSSR) each bind ATP.

It belongs to the pantothenate synthetase family. Homodimer.

Its subcellular location is the cytoplasm. The catalysed reaction is (R)-pantoate + beta-alanine + ATP = (R)-pantothenate + AMP + diphosphate + H(+). Its pathway is cofactor biosynthesis; (R)-pantothenate biosynthesis; (R)-pantothenate from (R)-pantoate and beta-alanine: step 1/1. In terms of biological role, catalyzes the condensation of pantoate with beta-alanine in an ATP-dependent reaction via a pantoyl-adenylate intermediate. The chain is Pantothenate synthetase from Streptomyces avermitilis (strain ATCC 31267 / DSM 46492 / JCM 5070 / NBRC 14893 / NCIMB 12804 / NRRL 8165 / MA-4680).